The chain runs to 414 residues: Probable mannose-1-phosphate guanyltransferase (414 aa).

This sequence belongs to the transferase hexapeptide repeat family.

It localises to the cytoplasm. The protein localises to the nucleus. The catalysed reaction is alpha-D-mannose 1-phosphate + GTP + H(+) = GDP-alpha-D-mannose + diphosphate. The protein operates within nucleotide-sugar biosynthesis; GDP-alpha-D-mannose biosynthesis; GDP-alpha-D-mannose from alpha-D-mannose 1-phosphate (GTP route): step 1/1. Its function is as follows. Involved in cell wall synthesis where it is required for glycosylation. This is Probable mannose-1-phosphate guanyltransferase from Schizosaccharomyces pombe (strain 972 / ATCC 24843) (Fission yeast).